A 726-amino-acid polypeptide reads, in one-letter code: Delta-1-pyrroline-5-carboxylate synthase B (726 aa).

The segment at 1 to 296 is glutamate 5-kinase; the sequence is MTEIDRSRAF…WAPVVDTTSR (296 aa). 3 residues coordinate substrate: Ser-60, Asp-157, and Asn-176. ATP is bound by residues 196–197 and 236–242; these read SD and RGGMTAK. The interval 297 to 717 is gamma-glutamyl phosphate reductase; it reads DMAVAARESS…YTHKDLPVLQ (421 aa).

The protein in the N-terminal section; belongs to the glutamate 5-kinase family. It in the C-terminal section; belongs to the gamma-glutamyl phosphate reductase family.

It catalyses the reaction L-glutamate + ATP = L-glutamyl 5-phosphate + ADP. The enzyme catalyses L-glutamate 5-semialdehyde + phosphate + NADP(+) = L-glutamyl 5-phosphate + NADPH + H(+). It functions in the pathway amino-acid biosynthesis; L-proline biosynthesis; L-glutamate 5-semialdehyde from L-glutamate: step 1/2. The protein operates within amino-acid biosynthesis; L-proline biosynthesis; L-glutamate 5-semialdehyde from L-glutamate: step 2/2. Its function is as follows. P5CS plays a key role in proline biosynthesis, leading to osmoregulation in plants. This Arabidopsis thaliana (Mouse-ear cress) protein is Delta-1-pyrroline-5-carboxylate synthase B (P5CSB).